Reading from the N-terminus, the 238-residue chain is Uridylate kinase (238 aa).

Residue 12–15 (KLSG) coordinates ATP. Residues 20 to 25 (GEKGFG) are involved in allosteric activation by GTP. A UMP-binding site is contributed by Gly54. Residues Gly55 and Arg59 each coordinate ATP. Residues Asp74 and 135–142 (TGSPYFST) contribute to the UMP site. ATP contacts are provided by Asn163, Tyr169, and Asp172.

Belongs to the UMP kinase family. Homohexamer.

The protein resides in the cytoplasm. It carries out the reaction UMP + ATP = UDP + ADP. The protein operates within pyrimidine metabolism; CTP biosynthesis via de novo pathway; UDP from UMP (UMPK route): step 1/1. With respect to regulation, allosterically activated by GTP. Inhibited by UTP. Its function is as follows. Catalyzes the reversible phosphorylation of UMP to UDP. The protein is Uridylate kinase of Lactococcus lactis subsp. lactis (strain IL1403) (Streptococcus lactis).